Reading from the N-terminus, the 1706-residue chain is Bifunctional hemolysin/adenylate cyclase (1706 aa).

The interval 1 to 399 (MQQSHQAGYA…RRPSLGAVER (399 aa)) is a, catalytic. 349–356 (AYGVAGKS) lines the ATP pocket. The disordered stretch occupies residues 383 to 405 (VPASPGLRRPSLGAVERQDSGYD). A b, Ala/Gly-rich region spans residues 400-912 (QDSGYDSLDG…LKHSIKLDVI (513 aa)). Residues 500-698 (LSAAVFGLGE…SVVGAPVAVV (199 aa)) are required for interaction with CyaC. 2 N6-palmitoyl lysine lipidation sites follow: Lys860 and Lys983. Residues 913–1656 (GGDGDDVVLA…RDADHRVEII (744 aa)) form a c region. Hemolysin-type calcium-binding repeat units lie at residues 1014-1031 (IGGA…DNFL), 1032-1049 (AGGS…NDTL), 1050-1067 (VGGE…DDVF), 1155-1172 (WGHD…DDIL), 1173-1190 (RGGL…NDIF), 1279-1296 (MGQG…DDLL), 1297-1314 (FGGD…NDTL), 1315-1332 (YGGL…NDWF), 1335-1352 (TQAR…VDTV), 1411-1428 (TGDA…ADVL), 1429-1446 (AGGE…DDQL), 1447-1464 (SGDA…DDWF), 1468-1484 (AANA…RDTV), 1537-1554 (IGDA…NDVL), 1555-1572 (SGGA…SDLL), 1573-1590 (SGDA…DDTY), and 1603-1620 (ESGG…ADQL). A d, Asp/Gly-rich region spans residues 1657–1706 (HAANQAVDQAGIEKLVEAMAQYPDPGAAAAAPPAARVPDTLMQSLAVNWR).

The protein in the N-terminal section; belongs to the adenylyl cyclase class-2 family. In the C-terminal section; belongs to the RTX prokaryotic toxin family. Post-translationally, released in a processed form. In terms of processing, palmitoylated at Lys-860 and Lys-983 by CyaC. The toxin only becomes active when modified in position Lys-983: palmitoylation is required for efficient membrane insertion and pore formation of the acylated Hemolysin chain.

The protein localises to the secreted. The protein resides in the host cell membrane. The catalysed reaction is ATP = 3',5'-cyclic AMP + diphosphate. Activated by host calmodulin. Functionally, bifunctional adenylate cyclase toxin-hemolysin that plays a crucial role in host colonization. It causes whooping cough by acting on mammalian cells by elevating cAMP-concentration and thus disrupts normal cell function. In terms of biological role, adenylate cyclase that is activated by host intracellular calmodulin and catalyzes un-regulated conversion of ATP to cAMP, thereby impairing microbicidal functions of immune effector cells and inducing apoptosis of lung macrophages. Hemolysin that forms small cation-selective membrane channels, leading to hemolytic activity. The hemolytic activity of CyaA is weak compared with that of the HlyA of E.coli. The polypeptide is Bifunctional hemolysin/adenylate cyclase (cya) (Bordetella pertussis (strain Tohama I / ATCC BAA-589 / NCTC 13251)).